Here is a 193-residue protein sequence, read N- to C-terminus: Molybdenum cofactor guanylyltransferase (193 aa).

GTP is bound by residues 8–10 (LAG), K21, D67, and D98. D98 contacts Mg(2+).

Belongs to the MobA family. In terms of assembly, monomer. Mg(2+) is required as a cofactor.

The protein localises to the cytoplasm. The catalysed reaction is Mo-molybdopterin + GTP + H(+) = Mo-molybdopterin guanine dinucleotide + diphosphate. Functionally, transfers a GMP moiety from GTP to Mo-molybdopterin (Mo-MPT) cofactor (Moco or molybdenum cofactor) to form Mo-molybdopterin guanine dinucleotide (Mo-MGD) cofactor. This chain is Molybdenum cofactor guanylyltransferase, found in Cereibacter sphaeroides (strain ATCC 17029 / ATH 2.4.9) (Rhodobacter sphaeroides).